The primary structure comprises 951 residues: Protein translocase subunit SecA 1 (951 aa).

ATP is bound by residues Gln87, 105-109 (GEGKT), and Asp525. Residues 911–942 (PVVSADRSSRDPGNPASWGKVGRNEDCPCGSG) are disordered. Cys937, Cys939, Cys948, and His949 together coordinate Zn(2+).

The protein belongs to the SecA family. In terms of assembly, monomer and homodimer. Part of the essential Sec protein translocation apparatus which comprises SecA, SecYEG and auxiliary proteins SecDF-YajC and YidC. Zn(2+) serves as cofactor.

The protein localises to the cell inner membrane. The protein resides in the cytoplasm. It carries out the reaction ATP + H2O + cellular proteinSide 1 = ADP + phosphate + cellular proteinSide 2.. Functionally, part of the Sec protein translocase complex. Interacts with the SecYEG preprotein conducting channel. Has a central role in coupling the hydrolysis of ATP to the transfer of proteins into and across the cell membrane, serving both as a receptor for the preprotein-SecB complex and as an ATP-driven molecular motor driving the stepwise translocation of polypeptide chains across the membrane. The sequence is that of Protein translocase subunit SecA 1 from Nitrobacter hamburgensis (strain DSM 10229 / NCIMB 13809 / X14).